Reading from the N-terminus, the 443-residue chain is Squalene synthase (443 aa).

The next 2 membrane-spanning stretches (helical) occupy residues 291-311 (TSFN…ELVF) and 423-443 (ILLL…VRII).

This sequence belongs to the phytoene/squalene synthase family. Requires Mg(2+) as cofactor.

It localises to the endoplasmic reticulum membrane. The enzyme catalyses 2 (2E,6E)-farnesyl diphosphate + NADPH + H(+) = squalene + 2 diphosphate + NADP(+). The catalysed reaction is 2 (2E,6E)-farnesyl diphosphate + NADH + H(+) = squalene + 2 diphosphate + NAD(+). Its pathway is terpene metabolism; lanosterol biosynthesis; lanosterol from farnesyl diphosphate: step 1/3. Catalyzes the condensation of 2 two farnesyl pyrophosphate moieties to form squalene. It is the first committed enzyme of the sterol biosynthesis pathway. Required for the biosynthesis of ergosterol. This Cyberlindnera jadinii (Torula yeast) protein is Squalene synthase (ERG9).